Consider the following 592-residue polypeptide: Frizzled-9 (592 aa).

Residues 1-23 (MAVPPLLRGALLLWQLLATGGAA) form the signal peptide. Residues 24-230 (LEIGRFDPER…EVFWSRRDKD (207 aa)) lie on the Extracellular side of the membrane. Positions 35–156 (RGPAPCQAME…NDPHALCMEA (122 aa)) constitute an FZ domain. Disulfide bonds link Cys-40-Cys-101, Cys-48-Cys-94, Cys-85-Cys-123, Cys-112-Cys-153, and Cys-116-Cys-140. Asn-54 carries N-linked (GlcNAc...) asparagine glycosylation. The segment at 59–173 (PNLLGHTSQG…PTEPHKGLGM (115 aa)) is required for Wnt-activated receptor activity. The N-linked (GlcNAc...) asparagine glycan is linked to Asn-159. A helical transmembrane segment spans residues 231 to 251 (FALVWMAVWSALCFFSTAFTV). Residues 252 to 267 (FTFLLEPHRFQYPERP) lie on the Cytoplasmic side of the membrane. A helical transmembrane segment spans residues 268–288 (IIFLSMCYNVYSLAFLIRAVA). At 289 to 316 (GAQSVACDQEAGALYVIQEGLENTGCTL) the chain is on the extracellular side. The chain crosses the membrane as a helical span at residues 317-337 (VFLLLYYFGMASSLWWVVLTL). Topologically, residues 338–356 (TWFLAAGKKWGHEAIEAHG) are cytoplasmic. A helical transmembrane segment spans residues 357-377 (SYFHMAAWGLPALKTIVVLTL). The Extracellular portion of the chain corresponds to 378–401 (RKVAGDELTGLCYVASMDPAALTG). The chain crosses the membrane as a helical span at residues 402-422 (FVLVPLSCYLVLGTSFLLTGF). Residues 423–448 (VALFHIRKIMKTGGTNTEKLEKLMVK) are Cytoplasmic-facing. Residues 449 to 469 (IGVFSILYTVPATCVIVCYVY) form a helical membrane-spanning segment. Topologically, residues 470 to 509 (ERLNMDFWRLRATEQPCTAATVPGGRRDCSLPGGSVPTVA) are extracellular. Residues 510–530 (VFMLKIFMSLVVGITSGVWVW) traverse the membrane as a helical segment. At 531–592 (SSKTFQTWQS…DPSLENPTHL (62 aa)) the chain is on the cytoplasmic side. The Lys-Thr-X-X-X-Trp motif, mediates interaction with the PDZ domain of Dvl family members motif lies at 533–538 (KTFQTW). The required for CTNNB1 accumulation and TCF transcription factor activity stretch occupies residues 555–592 (ACRTPGGYGRGTHCHYKAPTVVLHMTKTDPSLENPTHL).

This sequence belongs to the G-protein coupled receptor Fz/Smo family. Post-translationally, ubiquitinated by ZNRF3, leading to its degradation by the proteasome. In the embryo, found in the neural tube, trunk skeletal muscle precursors (myotomes), limb skeletal anlagen, craniofacial regions and nephric ducts. In the adult, expression is abundant in heart, brain, testis and skeletal muscle. In the testis, expressed in all spermatogenic cell types. Lower levels in adult lung, liver and kidney. Barely detectable in spleen. Expressed also in chondrocytes.

It localises to the cell membrane. Functionally, receptor for WNT2 that is coupled to the beta-catenin canonical signaling pathway, which leads to the activation of disheveled proteins, inhibition of GSK-3 kinase, nuclear accumulation of beta-catenin and activation of Wnt target genes. Plays a role in neuromuscular junction (NMJ) assembly by negatively regulating the clustering of acetylcholine receptors (AChR) through the beta-catenin canonical signaling pathway. May play a role in neural progenitor cells (NPCs) viability through the beta-catenin canonical signaling pathway by negatively regulating cell cycle arrest leading to inhibition of neuron apoptotic process. During hippocampal development, regulates neuroblast proliferation and apoptotic cell death. Controls bone formation through non canonical Wnt signaling mediated via ISG15. Positively regulates bone regeneration through non canonical Wnt signaling. The sequence is that of Frizzled-9 (Fzd9) from Mus musculus (Mouse).